The following is a 320-amino-acid chain: tRNA U34 carboxymethyltransferase (320 aa).

Residues Lys-89, Trp-103, Lys-108, Gly-128, 150 to 152 (DPT), 179 to 180 (IE), Met-194, Tyr-198, and Arg-313 each bind carboxy-S-adenosyl-L-methionine.

This sequence belongs to the class I-like SAM-binding methyltransferase superfamily. CmoB family. Homotetramer.

The enzyme catalyses carboxy-S-adenosyl-L-methionine + 5-hydroxyuridine(34) in tRNA = 5-carboxymethoxyuridine(34) in tRNA + S-adenosyl-L-homocysteine + H(+). Catalyzes carboxymethyl transfer from carboxy-S-adenosyl-L-methionine (Cx-SAM) to 5-hydroxyuridine (ho5U) to form 5-carboxymethoxyuridine (cmo5U) at position 34 in tRNAs. This Actinobacillus pleuropneumoniae serotype 3 (strain JL03) protein is tRNA U34 carboxymethyltransferase.